A 337-amino-acid polypeptide reads, in one-letter code: Lipoyl synthase (337 aa).

Residues C81, C86, C92, C107, C111, C114, and S323 each contribute to the [4Fe-4S] cluster site. A Radical SAM core domain is found at 93 to 312 (FSHGTATFMI…EDYGNALGFS (220 aa)).

The protein belongs to the radical SAM superfamily. Lipoyl synthase family. [4Fe-4S] cluster is required as a cofactor.

The protein localises to the cytoplasm. It carries out the reaction [[Fe-S] cluster scaffold protein carrying a second [4Fe-4S](2+) cluster] + N(6)-octanoyl-L-lysyl-[protein] + 2 oxidized [2Fe-2S]-[ferredoxin] + 2 S-adenosyl-L-methionine + 4 H(+) = [[Fe-S] cluster scaffold protein] + N(6)-[(R)-dihydrolipoyl]-L-lysyl-[protein] + 4 Fe(3+) + 2 hydrogen sulfide + 2 5'-deoxyadenosine + 2 L-methionine + 2 reduced [2Fe-2S]-[ferredoxin]. It functions in the pathway protein modification; protein lipoylation via endogenous pathway; protein N(6)-(lipoyl)lysine from octanoyl-[acyl-carrier-protein]: step 2/2. Catalyzes the radical-mediated insertion of two sulfur atoms into the C-6 and C-8 positions of the octanoyl moiety bound to the lipoyl domains of lipoate-dependent enzymes, thereby converting the octanoylated domains into lipoylated derivatives. The polypeptide is Lipoyl synthase (Xanthomonas campestris pv. campestris (strain B100)).